Reading from the N-terminus, the 236-residue chain is MYQLGDVKKIVLPGDPIEVQGKMRNGVYRGQDNRYYSEYFGTLQVNDQFVDVVPFSGQYIPRKGDKVIGKVIEVGPSTWTVDINSPYFAMLHMNDTPWRMSSGDLKRYLNAGDYIYAKIMSVNEIKESWLTLKEPGLKKLEGGHMVLIHASRVPRVIGKGGGMVNMVKELTATRIIIGQNGLIWIDGPIEGVTMAIAAIEMIEREAHTEGLTARVESFLKELKGEKDGSQQNKADQ.

In terms of domain architecture, S1 motif spans 64-133 (GDKVIGKVIE…EIKESWLTLK (70 aa)). The KH domain occupies 141-199 (EGGHMVLIHASRVPRVIGKGGGMVNMVKELTATRIIIGQNGLIWIDGPIEGVTMAIAAI).

The protein belongs to the RRP4 family. In terms of assembly, component of the archaeal exosome complex. Forms a trimer of Rrp4 and/or Csl4 subunits. The trimer associates with a hexameric ring-like arrangement composed of 3 Rrp41-Rrp42 heterodimers.

The protein resides in the cytoplasm. Non-catalytic component of the exosome, which is a complex involved in RNA degradation. Increases the RNA binding and the efficiency of RNA degradation. Confers strong poly(A) specificity to the exosome. The polypeptide is Exosome complex component Rrp4 (Thermoplasma acidophilum (strain ATCC 25905 / DSM 1728 / JCM 9062 / NBRC 15155 / AMRC-C165)).